Here is a 282-residue protein sequence, read N- to C-terminus: Bis(5'-nucleosyl)-tetraphosphatase, symmetrical (282 aa).

It belongs to the Ap4A hydrolase family.

It carries out the reaction P(1),P(4)-bis(5'-adenosyl) tetraphosphate + H2O = 2 ADP + 2 H(+). Hydrolyzes diadenosine 5',5'''-P1,P4-tetraphosphate to yield ADP. This Escherichia coli O81 (strain ED1a) protein is Bis(5'-nucleosyl)-tetraphosphatase, symmetrical.